Reading from the N-terminus, the 392-residue chain is Acetyl-CoA acetyltransferase (392 aa).

C87 (acyl-thioester intermediate) is an active-site residue. Catalysis depends on proton acceptor residues H348 and C378.

This sequence belongs to the thiolase-like superfamily. Thiolase family.

It localises to the cytoplasm. It catalyses the reaction 2 acetyl-CoA = acetoacetyl-CoA + CoA. Its pathway is metabolic intermediate biosynthesis; (R)-mevalonate biosynthesis; (R)-mevalonate from acetyl-CoA: step 1/3. Its function is as follows. Involved in the production of polyhydroxyalkonic acids (PHAs), composed primarily of 3-hydroxybutyric acid (3HB) and 3-hydroxyvaleric acid (3HV). The protein is Acetyl-CoA acetyltransferase (phaA) of Chromobacterium violaceum (strain ATCC 12472 / DSM 30191 / JCM 1249 / CCUG 213 / NBRC 12614 / NCIMB 9131 / NCTC 9757 / MK).